We begin with the raw amino-acid sequence, 365 residues long: Aminomethyltransferase (365 aa).

This sequence belongs to the GcvT family. The glycine cleavage system is composed of four proteins: P, T, L and H.

The catalysed reaction is N(6)-[(R)-S(8)-aminomethyldihydrolipoyl]-L-lysyl-[protein] + (6S)-5,6,7,8-tetrahydrofolate = N(6)-[(R)-dihydrolipoyl]-L-lysyl-[protein] + (6R)-5,10-methylene-5,6,7,8-tetrahydrofolate + NH4(+). Its function is as follows. The glycine cleavage system catalyzes the degradation of glycine. The protein is Aminomethyltransferase of Bacillus pumilus (strain SAFR-032).